Reading from the N-terminus, the 430-residue chain is tRNA(Ile)-lysidine synthase (430 aa).

24–29 (SGGLDS) contributes to the ATP binding site.

It belongs to the tRNA(Ile)-lysidine synthase family.

It localises to the cytoplasm. The catalysed reaction is cytidine(34) in tRNA(Ile2) + L-lysine + ATP = lysidine(34) in tRNA(Ile2) + AMP + diphosphate + H(+). Functionally, ligates lysine onto the cytidine present at position 34 of the AUA codon-specific tRNA(Ile) that contains the anticodon CAU, in an ATP-dependent manner. Cytidine is converted to lysidine, thus changing the amino acid specificity of the tRNA from methionine to isoleucine. The sequence is that of tRNA(Ile)-lysidine synthase from Haemophilus influenzae (strain PittGG).